The chain runs to 349 residues: Glycerol-3-phosphate dehydrogenase [NAD(P)+] (349 aa).

Trp20, Arg43, Arg44, and Lys117 together coordinate NADPH. Residues Lys117 and Gly147 each contribute to the sn-glycerol 3-phosphate site. Ala151 lines the NADPH pocket. Residues Lys202, Asp255, Ser265, Arg266, and Asn267 each coordinate sn-glycerol 3-phosphate. The active-site Proton acceptor is the Lys202. Arg266 serves as a coordination point for NADPH. Residues Val297 and Glu299 each contribute to the NADPH site.

The protein belongs to the NAD-dependent glycerol-3-phosphate dehydrogenase family.

It is found in the cytoplasm. It carries out the reaction sn-glycerol 3-phosphate + NAD(+) = dihydroxyacetone phosphate + NADH + H(+). The enzyme catalyses sn-glycerol 3-phosphate + NADP(+) = dihydroxyacetone phosphate + NADPH + H(+). The protein operates within membrane lipid metabolism; glycerophospholipid metabolism. Functionally, catalyzes the reduction of the glycolytic intermediate dihydroxyacetone phosphate (DHAP) to sn-glycerol 3-phosphate (G3P), the key precursor for phospholipid synthesis. In Mycobacterium leprae (strain TN), this protein is Glycerol-3-phosphate dehydrogenase [NAD(P)+].